A 577-amino-acid polypeptide reads, in one-letter code: Proline--tRNA ligase (577 aa).

The protein belongs to the class-II aminoacyl-tRNA synthetase family. ProS type 1 subfamily. In terms of assembly, homodimer.

The protein resides in the cytoplasm. The enzyme catalyses tRNA(Pro) + L-proline + ATP = L-prolyl-tRNA(Pro) + AMP + diphosphate. Functionally, catalyzes the attachment of proline to tRNA(Pro) in a two-step reaction: proline is first activated by ATP to form Pro-AMP and then transferred to the acceptor end of tRNA(Pro). As ProRS can inadvertently accommodate and process non-cognate amino acids such as alanine and cysteine, to avoid such errors it has two additional distinct editing activities against alanine. One activity is designated as 'pretransfer' editing and involves the tRNA(Pro)-independent hydrolysis of activated Ala-AMP. The other activity is designated 'posttransfer' editing and involves deacylation of mischarged Ala-tRNA(Pro). The misacylated Cys-tRNA(Pro) is not edited by ProRS. The sequence is that of Proline--tRNA ligase from Herminiimonas arsenicoxydans.